A 207-amino-acid polypeptide reads, in one-letter code: ATP synthase subunit b 2 (207 aa).

The chain crosses the membrane as a helical span at residues 53–72 (TYASQLLWLVITFSVFYLLM).

It belongs to the ATPase B chain family. In terms of assembly, F-type ATPases have 2 components, F(1) - the catalytic core - and F(0) - the membrane proton channel. F(1) has five subunits: alpha(3), beta(3), gamma(1), delta(1), epsilon(1). F(0) has three main subunits: a(1), b(2) and c(10-14). The alpha and beta chains form an alternating ring which encloses part of the gamma chain. F(1) is attached to F(0) by a central stalk formed by the gamma and epsilon chains, while a peripheral stalk is formed by the delta and b chains.

It localises to the cell inner membrane. F(1)F(0) ATP synthase produces ATP from ADP in the presence of a proton or sodium gradient. F-type ATPases consist of two structural domains, F(1) containing the extramembraneous catalytic core and F(0) containing the membrane proton channel, linked together by a central stalk and a peripheral stalk. During catalysis, ATP synthesis in the catalytic domain of F(1) is coupled via a rotary mechanism of the central stalk subunits to proton translocation. In terms of biological role, component of the F(0) channel, it forms part of the peripheral stalk, linking F(1) to F(0). The b'-subunit is a diverged and duplicated form of b found in plants and photosynthetic bacteria. This is ATP synthase subunit b 2 (atpF2) from Rhizobium leguminosarum bv. trifolii (strain WSM2304).